The chain runs to 325 residues: Aspartate carbamoyltransferase catalytic subunit (325 aa).

Arg-64 and Thr-65 together coordinate carbamoyl phosphate. Lys-92 contacts L-aspartate. The carbamoyl phosphate site is built by Arg-114, His-142, and Gln-145. L-aspartate-binding residues include Arg-176 and Arg-230. Gly-271 and Pro-272 together coordinate carbamoyl phosphate.

Belongs to the aspartate/ornithine carbamoyltransferase superfamily. ATCase family. As to quaternary structure, heterododecamer (2C3:3R2) of six catalytic PyrB chains organized as two trimers (C3), and six regulatory PyrI chains organized as three dimers (R2).

The catalysed reaction is carbamoyl phosphate + L-aspartate = N-carbamoyl-L-aspartate + phosphate + H(+). The protein operates within pyrimidine metabolism; UMP biosynthesis via de novo pathway; (S)-dihydroorotate from bicarbonate: step 2/3. In terms of biological role, catalyzes the condensation of carbamoyl phosphate and aspartate to form carbamoyl aspartate and inorganic phosphate, the committed step in the de novo pyrimidine nucleotide biosynthesis pathway. The sequence is that of Aspartate carbamoyltransferase catalytic subunit from Nitratidesulfovibrio vulgaris (strain DSM 19637 / Miyazaki F) (Desulfovibrio vulgaris).